A 217-amino-acid polypeptide reads, in one-letter code: uncharacterized protein (217 aa).

2 disordered regions span residues 1–85 (MGVK…RGNT) and 167–189 (KLRSPPHKDQHNSATNKDQEPDE). Positions 38–48 (AKSDKDKRKGS) are enriched in basic and acidic residues. Low complexity predominate over residues 60–78 (NALPTKNLTTPPALNPLTT). Positions 172-189 (PHKDQHNSATNKDQEPDE) are enriched in basic and acidic residues.

This is an uncharacterized protein from Saccharomyces cerevisiae (strain ATCC 204508 / S288c) (Baker's yeast).